Reading from the N-terminus, the 1179-residue chain is Integrin alpha-7 (1179 aa).

An N-terminal signal peptide occupies residues 1-33; that stretch reads MARIPRCDFLRPPGIYYLITSLLAGLFLPPAIA. Over 34-1076 the chain is Extracellular; that stretch reads FNLDVMGAIR…YLDPMAVVVE (1043 aa). 7 FG-GAP repeats span residues 38-103, 110-175, 185-238, 292-349, 350-411, 412-467, and 471-530; these read VMGA…ETDC, RGAN…IRDE, EGRP…SPDL, DRLT…ATRL, IPEV…HWAD, ISPL…GVVV, and QVLE…IDPR. N-linked (GlcNAc...) asparagine glycosylation is present at Asn86. Cystine bridges form between Cys94-Cys103, Cys140-Cys163, and Cys184-Cys197. Positions 372, 374, 376, 380, 434, 436, 438, 442, 492, 494, 496, 498, and 500 each coordinate Ca(2+). Cystine bridges form between Cys539–Cys546, Cys552–Cys615, Cys681–Cys687, Cys781–Cys792, Cys939–Cys993, and Cys999–Cys1004. Asn784 carries an N-linked (GlcNAc...) asparagine glycan. Positions 952-961 are enriched in basic and acidic residues; it reads SRDRRRRELG. Positions 952 to 978 are disordered; sequence SRDRRRRELGQPEPQEPPEKVEPSTSW. N-linked (GlcNAc...) asparagine glycosylation is present at Asn988. Asn1023 and Asn1043 each carry an N-linked (GlcNAc...) asparagine glycan. Residues 1077 to 1102 traverse the membrane as a helical segment; that stretch reads GVPWWVILLGVLAGLLVLALLVLLLW. The Cytoplasmic segment spans residues 1103-1179; it reads KLGFFKRAKH…PDGHPVPATA (77 aa). Residues 1105–1109 carry the GFFKR motif motif; it reads GFFKR. The interval 1134–1153 is disordered; the sequence is KEEKTGTIQRSNWGNSQWEG. The segment covering 1139 to 1152 has biased composition (polar residues); that stretch reads GTIQRSNWGNSQWE. 3 repeat units span residues 1155-1158, 1163-1166, and 1171-1174. Positions 1155 to 1174 are 3 X 4 AA repeats of D-X-H-P; that stretch reads DAHPILAADWHPELGPDGHP.

Belongs to the integrin alpha chain family. In terms of assembly, heterodimer of an alpha and a beta subunit. The alpha subunit is composed of a heavy and a light chain linked by a disulfide bond. Alpha-7 associates with beta-1. Interacts with COMP. Interacts (via C-terminus intracellular tail region) with CIB1; the interaction is stabilized/increased in a calcium- and magnesium-dependent manner. Post-translationally, ADP-ribosylated on at least two sites of the extracellular domain in skeletal myotubes (in vitro). In terms of processing, no proteolytic cleavage to produce the 70 kDa form is seen due to the presence of a Gly instead of an arginine residue at position 647. Isoforms containing segment X2 are found in adult heart, lung and skeletal muscle. Isoforms containing segment X1 are expressed in adult heart, lung and in proliferating skeletal myoblasts but not in adult skeletal muscle. Isoforms containing segment a are exclusively found in skeletal muscle. Isoforms containing segment B are widely expressed. In muscle fibers isoforms containing segment A and B are expressed at myotendinous and neuromuscular junctions; isoforms containing segment C are expressed at neuromuscular junctions and at extrasynaptic sites.

Its subcellular location is the membrane. Integrin alpha-7/beta-1 is the primary laminin receptor on skeletal myoblasts and adult myofibers. During myogenic differentiation, it may induce changes in the shape and mobility of myoblasts, and facilitate their localization at laminin-rich sites of secondary fiber formation. Involved in the maintenance of the myofibers cytoarchitecture as well as for their anchorage, viability and functional integrity. Mice carrying a ITGA7 null allele are viable and fertile, but show progressive muscular dystrophy starting soon after birth, but with a distinct variability in different muscle types. Required to promote contractile phenotype acquisition in differentiated airway smooth muscle (ASM) cells. Acts as a Schwann cell receptor for laminin-2. Acts as a receptor of COMP and mediates its effect on vascular smooth muscle cells (VSMCs) maturation. This is Integrin alpha-7 (Itga7) from Mus musculus (Mouse).